Reading from the N-terminus, the 457-residue chain is Secreted effector kinase SteC (457 aa).

K256 contributes to the ATP binding site.

The protein belongs to the protein kinase superfamily. Post-translationally, autophosphorylated.

It is found in the secreted. The protein localises to the host cytoplasm. In terms of biological role, effector proteins function to alter host cell physiology and promote bacterial survival in host tissues. This protein is a kinase, which is required for SPI-2 T3SS-dependent F-actin meshwork formation in infected host cells. This chain is Secreted effector kinase SteC (steC), found in Salmonella typhimurium (strain LT2 / SGSC1412 / ATCC 700720).